Reading from the N-terminus, the 362-residue chain is Molybdenum import ATP-binding protein ModC (362 aa).

The 235-residue stretch at 4-238 folds into the ABC transporter domain; sequence AGEAAIRARF…LDLPIRLGED (235 aa). 38–45 serves as a coordination point for ATP; that stretch reads GHSGSGKT. One can recognise a Mop domain in the interval 297 to 362; sequence GTSILNTLPA…AQIKAVALVG (66 aa).

Belongs to the ABC transporter superfamily. Molybdate importer (TC 3.A.1.8) family. As to quaternary structure, the complex is composed of two ATP-binding proteins (ModC), two transmembrane proteins (ModB) and a solute-binding protein (ModA).

It localises to the cell inner membrane. The enzyme catalyses molybdate(out) + ATP + H2O = molybdate(in) + ADP + phosphate + H(+). Part of the ABC transporter complex ModABC involved in molybdenum import. Responsible for energy coupling to the transport system. In Thiobacillus denitrificans (strain ATCC 25259 / T1), this protein is Molybdenum import ATP-binding protein ModC.